Here is a 772-residue protein sequence, read N- to C-terminus: Tubulin monoglycylase TTLL3 (772 aa).

Positions Pro50–Phe81 are disordered. The span at Asp68–Phe81 shows a compositional bias: acidic residues. In terms of domain architecture, TTL spans Ala151–Gly510. ATP is bound by residues Lys283, Arg289–Gly290, Gln321–Ile324, Lys334–Asp336, and Cys378–Asn379. Residue Arg289 coordinates a protein. Ser381 serves as a coordination point for L-glutamate. Mg(2+) contacts are provided by Asp456, Glu469, and Asn471. Residue Glu469 participates in ATP binding.

Mg(2+) serves as cofactor. Expressed in brain, heart, kidney, testis, liver, lung, muscle, spleen, trachea and colon.

The protein localises to the cytoplasm. It localises to the cytoskeleton. It is found in the cell projection. Its subcellular location is the cilium. The protein resides in the cilium axoneme. The protein localises to the flagellum axoneme. The catalysed reaction is L-glutamyl-[protein] + glycine + ATP = glycyl-L-glutamyl-[protein] + ADP + phosphate + H(+). Monoglycylase which modifies alpha- and beta-tubulin, adding a single glycine on the gamma-carboxyl groups of specific glutamate residues to generate monoglycine side chains within the C-terminal tail of tubulin. Not involved in elongation step of the polyglycylation reaction. Preferentially glycylates a beta-tail peptide over the alpha-tail, although shifts its preference toward alpha-tail as beta-tail glutamylation increases. Competes with polyglutamylases for modification site on beta-tubulin substrate, thereby creating an anticorrelation between glycylation and glutamylation reactions. Together with TTLL8, mediates microtubule glycylation of primary and motile cilia, which is essential for their stability and maintenance. Involved in microtubule glycylation of primary cilia in colon which controls cell proliferation of epithelial cells and plays an essential role in colon cancer development. Together with TTLL8, glycylates sperm flagella which regulates axonemal dynein motor activity, thereby controlling flagellar beat, directional sperm swimming and male fertility. In Homo sapiens (Human), this protein is Tubulin monoglycylase TTLL3.